A 321-amino-acid polypeptide reads, in one-letter code: Gap junction delta-2 protein (321 aa).

At 1–19 (MGEWTILERLLEAAVQQHS) the chain is on the cytoplasmic side. A helical membrane pass occupies residues 20–42 (TMIGRILLTVVVIFRILIVAIVG). The Extracellular segment spans residues 43-75 (ETVYDDEQTMFVCNTLQPGCNQACYDRAFPISH). A helical transmembrane segment spans residues 76–98 (IRYWVFQIIMVCTPSLCFITYSV). Residues 99–197 (HQSAKQRERR…KLRRQEGISR (99 aa)) are Cytoplasmic-facing. The disordered stretch occupies residues 117–141 (DRDPPESMGGPGGTGGGGSGGGKRE). Residues 125–137 (GGPGGTGGGGSGG) are compositionally biased toward gly residues. A helical membrane pass occupies residues 198–220 (FYIIQVVFRNALEIGFLVGQYFL). Residues 221-252 (YGFSVPGLYECDRYPCIKEVECYVSRPTEKTV) lie on the Extracellular side of the membrane. A helical transmembrane segment spans residues 253 to 275 (FLVFMFAVSGICVVLNLAELNHL). The Cytoplasmic portion of the chain corresponds to 276–321 (GWRKIKLAVRGAQAKRKSVYEIRNKDLPRVSVPNFGRTQSSDSAYV).

It belongs to the connexin family. Delta-type subfamily. A connexon is composed of a hexamer of connexins.

The protein localises to the cell membrane. Its subcellular location is the cell junction. It is found in the gap junction. Its function is as follows. One gap junction consists of a cluster of closely packed pairs of transmembrane channels, the connexons, through which materials of low MW diffuse from one cell to a neighboring cell. The protein is Gap junction delta-2 protein (GJD2) of Bos taurus (Bovine).